Consider the following 438-residue polypeptide: Enolase (438 aa).

Positions 159 and 168 each coordinate substrate. Catalysis depends on E211, which acts as the Proton donor. Mg(2+) contacts are provided by D246, E297, and D322. Residues E297 and D322 each coordinate substrate. K347 (proton acceptor) is an active-site residue. Substrate is bound by residues 374-377 (SHRS) and K398.

The protein belongs to the enolase family. Homodimer. Mg(2+) is required as a cofactor.

The protein resides in the cytoplasm. The enzyme catalyses (2R)-2-phosphoglycerate = phosphoenolpyruvate + H2O. Its pathway is carbohydrate degradation; glycolysis; pyruvate from D-glyceraldehyde 3-phosphate: step 4/5. The polypeptide is Enolase (enoA) (Penicillium chrysogenum (Penicillium notatum)).